The following is a 359-amino-acid chain: Isopentenyl-diphosphate delta-isomerase (359 aa).

Residue 11–12 (RK) participates in substrate binding. Residues S68, 69–71 (GMT), S99, and N127 each bind FMN. Substrate is bound at residue 99–101 (SQR). Q163 contributes to the substrate binding site. Mg(2+) is bound at residue E164. Residues K199, T229, 278–280 (GIR), and 299–300 (AL) contribute to the FMN site.

This sequence belongs to the IPP isomerase type 2 family. Homooctamer. Dimer of tetramers. It depends on FMN as a cofactor. Requires NADPH as cofactor. The cofactor is Mg(2+).

It is found in the cytoplasm. The catalysed reaction is isopentenyl diphosphate = dimethylallyl diphosphate. Inhibited by 3,4-epoxy-3-methylbutyl diphosphate (EIPP). Involved in the biosynthesis of isoprenoids. Catalyzes the 1,3-allylic rearrangement of the homoallylic substrate isopentenyl (IPP) to its allylic isomer, dimethylallyl diphosphate (DMAPP). This is Isopentenyl-diphosphate delta-isomerase from Methanocaldococcus jannaschii (strain ATCC 43067 / DSM 2661 / JAL-1 / JCM 10045 / NBRC 100440) (Methanococcus jannaschii).